A 200-amino-acid chain; its full sequence is Non-specific lipid transfer protein GPI-anchored 16 (200 aa).

An N-terminal signal peptide occupies residues 1–20 (MEGLTLIVVMMSSFMLGGQG). 4 cysteine pairs are disulfide-bonded: Cys-27–Cys-72, Cys-38–Cys-56, Cys-57–Cys-98, and Cys-70–Cys-107. N-linked (GlcNAc...) asparagine glycosylation is present at Asn-87. Positions 134–182 (SPGASKAAGTTPTQAPAPDTPADGPTGPTTKSGIRPVDQPMQPTGLAQS) are disordered. The span at 140-163 (AAGTTPTQAPAPDTPADGPTGPTT) shows a compositional bias: low complexity. Thr-177 is lipidated: GPI-anchor amidated threonine. The propeptide at 178-200 (GLAQSSTSPFLPLLFISLILLNL) is removed in mature form.

The protein belongs to the plant LTP family. Expressed in seedlings, preferentially in hypocotyls and roots. Also observed in siliques.

The protein localises to the cell membrane. Functionally, essential protein involved in female gametophyte development. Probable lipid transfer protein. The chain is Non-specific lipid transfer protein GPI-anchored 16 from Arabidopsis thaliana (Mouse-ear cress).